The chain runs to 263 residues: Small ribosomal subunit protein eS4 (263 aa).

Residues 42–104 (LPLIVFLRNR…TGEHFRLVYD (63 aa)) enclose the S4 RNA-binding domain.

This sequence belongs to the eukaryotic ribosomal protein eS4 family.

The sequence is that of Small ribosomal subunit protein eS4 (RPS4Y1) from Pan paniscus (Pygmy chimpanzee).